Consider the following 668-residue polypeptide: DNA-directed RNA polymerase subunit beta' (668 aa).

Zn(2+)-binding residues include cysteine 71, cysteine 73, cysteine 91, and cysteine 94. Mg(2+)-binding residues include aspartate 505, aspartate 507, and aspartate 509.

It belongs to the RNA polymerase beta' chain family. RpoC1 subfamily. As to quaternary structure, in plastids the minimal PEP RNA polymerase catalytic core is composed of four subunits: alpha, beta, beta', and beta''. When a (nuclear-encoded) sigma factor is associated with the core the holoenzyme is formed, which can initiate transcription. The cofactor is Mg(2+). Zn(2+) is required as a cofactor.

It is found in the plastid. It localises to the chloroplast. The catalysed reaction is RNA(n) + a ribonucleoside 5'-triphosphate = RNA(n+1) + diphosphate. DNA-dependent RNA polymerase catalyzes the transcription of DNA into RNA using the four ribonucleoside triphosphates as substrates. In Mesostigma viride (Green alga), this protein is DNA-directed RNA polymerase subunit beta'.